Reading from the N-terminus, the 1995-residue chain is uncharacterized protein (1995 aa).

The next 7 helical transmembrane spans lie at 31–51 (NYTEFGAVFTYFIFSIGEFFK), 53–73 (FFSFSFLNNIWSIPIIIPDIA), 106–126 (LVIFEKFVIGIINSLFLILPT), 157–177 (FLWLASIILGWRFFVIPWLSL), 212–232 (IFLLNFLLALTEQSCIYPFIS), 254–274 (FLLIHGAYLLGILFGSFSLLQ), and 307–327 (ILNFTFLYATMLCAIASIPYY). Disordered regions lie at residues 1418-1441 (SLKKSQIKKRSRHSWKKRSRHQFS) and 1848-1883 (DLRWRPSSRTKQKRKDNTRSSAASKTKSNKRVKTNP). Composition is skewed to basic residues over residues 1422 to 1441 (SQIKKRSRHSWKKRSRHQFS) and 1853 to 1863 (PSSRTKQKRKD).

This sequence belongs to the ycf78 family.

Its subcellular location is the plastid. It is found in the chloroplast membrane. Essential for cell growth. May be involved in binding chloroplast DNA to either the chloroplast envelope or the thylakoid membrane. This is an uncharacterized protein from Chlamydomonas reinhardtii (Chlamydomonas smithii).